Consider the following 1029-residue polypeptide: Ig-like and fibronectin type-III domain-containing protein 1 (1029 aa).

The first 22 residues, M1–A22, serve as a signal peptide directing secretion. The Extracellular portion of the chain corresponds to E23–S918. N-linked (GlcNAc...) asparagine glycosylation is found at N36, N93, N120, and N165. The Fibronectin type-III 1 domain occupies A90–T181. One can recognise a WR1 domain in the interval P185–P227. N-linked (GlcNAc...) asparagine glycans are attached at residues N257, N374, N409, N442, N482, N507, and N552. Fibronectin type-III domains follow at residues A330–A417 and A427–D523. One can recognise an Ig-like C2-type domain in the interval A619–I710. The cysteines at positions 640 and 693 are disulfide-linked. An N-linked (GlcNAc...) asparagine glycan is attached at N753. The 93-residue stretch at A817 to R909 folds into the Fibronectin type-III 4 domain. A helical transmembrane segment spans residues A919 to L939. Residues S940–T1029 lie on the Cytoplasmic side of the membrane. A disordered region spans residues S988–G1021. The segment covering Q998–D1013 has biased composition (polar residues).

It localises to the cell membrane. This Caenorhabditis elegans protein is Ig-like and fibronectin type-III domain-containing protein 1.